Here is a 204-residue protein sequence, read N- to C-terminus: Somatotropin (204 aa).

The first 17 residues, 1–17, serve as a signal peptide directing secretion; it reads MDRAILLLSVVCLVVSS. Q18 carries the pyrrolidone carboxylic acid modification. Residue H36 coordinates Zn(2+). Residues C69 and C177 are joined by a disulfide bond. Zn(2+) is bound at residue E186. A disulfide bond links C194 and C202.

This sequence belongs to the somatotropin/prolactin family.

Its subcellular location is the secreted. Its function is as follows. Growth hormone plays an important role in growth control and is involved in the regulation of several anabolic processes. Implicated as an osmoregulatory substance important for seawater adaptation. This Odontesthes argentinensis (Marine silverside) protein is Somatotropin (gh).